Consider the following 504-residue polypeptide: MEEFQGYLELDRSRQHDFLYPLLFREYIYALAHDHVLLNRSIFFENAGYYNKSSSIIVKRLITRMYQQNXLIFSANDSIQNPFFGHNNNLYSQIFSEGFAVIVEIPFSLRLVSSLERKEIAKSHNLRSIHSIFPFLEDKFSHLDYVLDVLMPYHIHLEILVQTLRYWVKDASSLHLLRFFLHEYWNSLITPKKHIPIFSKGNPRLFLFLYNSHMCEYESILLFLRNQSSHLRSTSSGIFFERIYFYVKIEHFAKXFFDNDFQCILWFFKDPFMHYVKYQGKSILASKDTPLFMNKWKYYLVNLWQYHFYAWFQPGRININQLCNYSIDFLGYRSSVRLNSSVVRSQMLENSFIINNAIKKFETIVPIIPLIGSLSKANFCNTLGHPISKPTRADSSDSDIIDRFLRICRNLSHYHSGSSKKKSLYRVKYILRLSCVKTLARKHKRTVRTFLKRLGSEFLEEFLTEEEVVLSLIFPRTYSTSRRLYRGQIWYLDITSINDLVNYE.

Belongs to the intron maturase 2 family. MatK subfamily.

The protein resides in the plastid. It localises to the chloroplast. Usually encoded in the trnK tRNA gene intron. Probably assists in splicing its own and other chloroplast group II introns. This chain is Maturase K, found in Calyptranthes pallens (Spicewood).